The chain runs to 249 residues: Pyridoxine 5'-phosphate synthase (249 aa).

Asn10 serves as a coordination point for 3-amino-2-oxopropyl phosphate. Position 12–13 (Asp12–His13) interacts with 1-deoxy-D-xylulose 5-phosphate. 3-amino-2-oxopropyl phosphate is bound at residue Arg21. His46 acts as the Proton acceptor in catalysis. 1-deoxy-D-xylulose 5-phosphate is bound by residues Arg48 and His53. Glu73 (proton acceptor) is an active-site residue. Residue Thr103 participates in 1-deoxy-D-xylulose 5-phosphate binding. The active-site Proton donor is the His194. 3-amino-2-oxopropyl phosphate contacts are provided by residues Gly195 and Gly216–His217.

Belongs to the PNP synthase family. Homooctamer; tetramer of dimers.

Its subcellular location is the cytoplasm. It carries out the reaction 3-amino-2-oxopropyl phosphate + 1-deoxy-D-xylulose 5-phosphate = pyridoxine 5'-phosphate + phosphate + 2 H2O + H(+). The protein operates within cofactor biosynthesis; pyridoxine 5'-phosphate biosynthesis; pyridoxine 5'-phosphate from D-erythrose 4-phosphate: step 5/5. Catalyzes the complicated ring closure reaction between the two acyclic compounds 1-deoxy-D-xylulose-5-phosphate (DXP) and 3-amino-2-oxopropyl phosphate (1-amino-acetone-3-phosphate or AAP) to form pyridoxine 5'-phosphate (PNP) and inorganic phosphate. The protein is Pyridoxine 5'-phosphate synthase of Rhodospirillum rubrum (strain ATCC 11170 / ATH 1.1.1 / DSM 467 / LMG 4362 / NCIMB 8255 / S1).